A 353-amino-acid polypeptide reads, in one-letter code: Photosystem II protein D1 (353 aa).

N-acetylthreonine is present on threonine 2. Residue threonine 2 is modified to Phosphothreonine. A run of 3 helical transmembrane segments spans residues 29–46, 118–133, and 142–156; these read YIGW…TATS, HFLL…EWEL, and WIAV…AATA. Histidine 118 is a chlorophyll a binding site. A pheophytin a-binding site is contributed by tyrosine 126. Residues aspartate 170 and glutamate 189 each coordinate [CaMn4O5] cluster. Residues 197 to 218 form a helical membrane-spanning segment; the sequence is FHMLGVAGVFGGSLFSAMHGSL. Residue histidine 198 participates in chlorophyll a binding. Residues histidine 215 and 264-265 each bind a quinone; that span reads SF. Histidine 215 contacts Fe cation. Residue histidine 272 participates in Fe cation binding. The helical transmembrane segment at 274–288 threads the bilayer; that stretch reads FLAAWPVVGIWFTAL. The [CaMn4O5] cluster site is built by histidine 332, glutamate 333, aspartate 342, and alanine 344. Residues 345-353 constitute a propeptide that is removed on maturation; it reads ALEVPSLNG.

Belongs to the reaction center PufL/M/PsbA/D family. As to quaternary structure, PSII is composed of 1 copy each of membrane proteins PsbA, PsbB, PsbC, PsbD, PsbE, PsbF, PsbH, PsbI, PsbJ, PsbK, PsbL, PsbM, PsbT, PsbX, PsbY, PsbZ, Psb30/Ycf12, at least 3 peripheral proteins of the oxygen-evolving complex and a large number of cofactors. It forms dimeric complexes. Requires The D1/D2 heterodimer binds P680, chlorophylls that are the primary electron donor of PSII, and subsequent electron acceptors. It shares a non-heme iron and each subunit binds pheophytin, quinone, additional chlorophylls, carotenoids and lipids. D1 provides most of the ligands for the Mn4-Ca-O5 cluster of the oxygen-evolving complex (OEC). There is also a Cl(-1) ion associated with D1 and D2, which is required for oxygen evolution. The PSII complex binds additional chlorophylls, carotenoids and specific lipids. as cofactor. Tyr-161 forms a radical intermediate that is referred to as redox-active TyrZ, YZ or Y-Z. Post-translationally, C-terminally processed by CTPA; processing is essential to allow assembly of the oxygen-evolving complex and thus photosynthetic growth.

Its subcellular location is the plastid. It localises to the chloroplast thylakoid membrane. It carries out the reaction 2 a plastoquinone + 4 hnu + 2 H2O = 2 a plastoquinol + O2. Its function is as follows. Photosystem II (PSII) is a light-driven water:plastoquinone oxidoreductase that uses light energy to abstract electrons from H(2)O, generating O(2) and a proton gradient subsequently used for ATP formation. It consists of a core antenna complex that captures photons, and an electron transfer chain that converts photonic excitation into a charge separation. The D1/D2 (PsbA/PsbD) reaction center heterodimer binds P680, the primary electron donor of PSII as well as several subsequent electron acceptors. This chain is Photosystem II protein D1, found in Oryza nivara (Indian wild rice).